The primary structure comprises 569 residues: Urease subunit alpha (569 aa).

The Urease domain maps to 131–569 (GSIDTHIHFI…VPMAQRYFLL (439 aa)). The Ni(2+) site is built by histidine 136, histidine 138, and lysine 219. Residue lysine 219 is modified to N6-carboxylysine. Histidine 221 is a substrate binding site. Positions 248 and 274 each coordinate Ni(2+). Histidine 322 (proton donor) is an active-site residue. Aspartate 362 is a binding site for Ni(2+).

The protein belongs to the metallo-dependent hydrolases superfamily. Urease alpha subunit family. Heterotrimer of UreA (gamma), UreB (beta) and UreC (alpha) subunits. Three heterotrimers associate to form the active enzyme. Ni cation serves as cofactor. In terms of processing, carboxylation allows a single lysine to coordinate two nickel ions.

It localises to the cytoplasm. The enzyme catalyses urea + 2 H2O + H(+) = hydrogencarbonate + 2 NH4(+). It participates in nitrogen metabolism; urea degradation; CO(2) and NH(3) from urea (urease route): step 1/1. The sequence is that of Urease subunit alpha from Prochlorococcus marinus (strain AS9601).